The primary structure comprises 271 residues: Beta-lactamase (271 aa).

Ser-46 functions as the Acyl-ester intermediate in the catalytic mechanism. A substrate-binding site is contributed by 210 to 212; sequence KTG.

It belongs to the class-A beta-lactamase family. Monomer.

The enzyme catalyses a beta-lactam + H2O = a substituted beta-amino acid. In terms of biological role, hydrolyzes broad-spectrum beta-lactam antibiotics. Active against cephalosporins. This Proteus vulgaris protein is Beta-lactamase.